A 101-amino-acid chain; its full sequence is Secreted RxLR effector protein 64 (101 aa).

An N-terminal signal peptide occupies residues 1 to 23 (MMSPPMTTTLMFILNYAIISFHG). The short motif at 48–51 (RELR) is the RxLR element. The chain crosses the membrane as a helical span at residues 67–87 (LQPILPLPLCLPFPLVPASIF).

The protein belongs to the RxLR effector family.

The protein localises to the secreted. Its subcellular location is the host cytoplasm. It is found in the host nucleus. The protein resides in the membrane. Effector that acts as a broad suppressor of cell death to interrupt plant immunity. Inhibits cell death induced by cell death-inducing proteins, including the PAMP elicitor INF1 from P.infestans. This chain is Secreted RxLR effector protein 64, found in Plasmopara viticola (Downy mildew of grapevine).